The sequence spans 152 residues: Transcriptional repressor NrdR (152 aa).

A zinc finger spans residues 3–34 (CPFCNHGELKVIDSRNAPEANAIKRRRECLNC). The 91-residue stretch at 48-138 (LQVLKRDGRY…VYRRFKDVGE (91 aa)) folds into the ATP-cone domain.

This sequence belongs to the NrdR family. The cofactor is Zn(2+).

Its function is as follows. Negatively regulates transcription of bacterial ribonucleotide reductase nrd genes and operons by binding to NrdR-boxes. The chain is Transcriptional repressor NrdR from Chlamydia abortus (strain DSM 27085 / S26/3) (Chlamydophila abortus).